The following is a 470-amino-acid chain: 4-O-methyltransferase 1 (470 aa).

Residues 274-275 (GG), Asp297, 328-329 (DC), and Lys344 each bind S-adenosyl-L-methionine. His348 (proton acceptor) is an active-site residue.

Belongs to the class I-like SAM-binding methyltransferase superfamily. Cation-independent O-methyltransferase family. COMT subfamily.

In terms of biological role, S-adenosyl-L-methionine-dependent methyltransferase that preferentially catalyzes the methylation of 4-OH phenolic compounds like coniferyl alcohol, vanillyl alcohol and ferrulic acid. May play a role in promoting lignin degradation by methylating and inactivating free-hydroxyl phenolic compounds, products of lignin cleavage which are known inhibitors of lignin peroxidases. The protein is 4-O-methyltransferase 1 of Phanerochaete chrysosporium (strain RP-78 / ATCC MYA-4764 / FGSC 9002) (White-rot fungus).